A 301-amino-acid chain; its full sequence is Probable alpha-L-glutamate ligase (301 aa).

Residues 104-287 enclose the ATP-grasp domain; that stretch reads LQILARKGIG…VAGKIIEYLE (184 aa). ATP-binding positions include Lys141, 178–179, Asp187, and 211–213; these read EY and RSN. Mg(2+)-binding residues include Asp248, Glu260, and Asn262. Mn(2+) contacts are provided by Asp248, Glu260, and Asn262.

This sequence belongs to the RimK family. Requires Mg(2+) as cofactor. Mn(2+) is required as a cofactor.

This is Probable alpha-L-glutamate ligase from Picosynechococcus sp. (strain ATCC 27264 / PCC 7002 / PR-6) (Agmenellum quadruplicatum).